The following is a 331-amino-acid chain: Thiamine-monophosphate kinase (331 aa).

Asp43, Thr59, Thr60, and Asp61 together coordinate Mg(2+). A substrate-binding site is contributed by His68. Residues Asp90, Asp138, and Asp231 each coordinate Mg(2+). Position 137–138 (137–138) interacts with ATP; sequence GD. Ser233 contacts ATP. Position 234 (Asp234) interacts with Mg(2+). Residues Glu284 and Trp328 each coordinate substrate.

This sequence belongs to the thiamine-monophosphate kinase family.

It catalyses the reaction thiamine phosphate + ATP = thiamine diphosphate + ADP. The protein operates within cofactor biosynthesis; thiamine diphosphate biosynthesis; thiamine diphosphate from thiamine phosphate: step 1/1. Its function is as follows. Catalyzes the ATP-dependent phosphorylation of thiamine-monophosphate (TMP) to form thiamine-pyrophosphate (TPP), the active form of vitamin B1. This chain is Thiamine-monophosphate kinase, found in Corynebacterium glutamicum (strain ATCC 13032 / DSM 20300 / JCM 1318 / BCRC 11384 / CCUG 27702 / LMG 3730 / NBRC 12168 / NCIMB 10025 / NRRL B-2784 / 534).